The primary structure comprises 539 residues: Eukaryotic translation initiation factor 3 subunit L (539 aa).

The region spanning 306 to 514 (TFSDILLYIQ…IHIADTKVSH (209 aa)) is the PCI domain.

This sequence belongs to the eIF-3 subunit L family. In terms of assembly, component of the eukaryotic translation initiation factor 3 (eIF-3) complex. The eIF-3 complex interacts with pix.

It localises to the cytoplasm. Its function is as follows. Component of the eukaryotic translation initiation factor 3 (eIF-3) complex, which is involved in protein synthesis of a specialized repertoire of mRNAs and, together with other initiation factors, stimulates binding of mRNA and methionyl-tRNAi to the 40S ribosome. The eIF-3 complex specifically targets and initiates translation of a subset of mRNAs involved in cell proliferation. The protein is Eukaryotic translation initiation factor 3 subunit L of Drosophila ananassae (Fruit fly).